We begin with the raw amino-acid sequence, 101 residues long: Small ubiquitin-related modifier 1 (101 aa).

Position 2 is an N-acetylserine (Ser-2). The residue at position 2 (Ser-2) is a Phosphoserine. Residue Lys-7 forms a Glycyl lysine isopeptide (Lys-Gly) (interchain with G-Cter in SUMO1); alternate linkage. Lys-7 participates in a covalent cross-link: Glycyl lysine isopeptide (Lys-Gly) (interchain with G-Cter in SUMO2); alternate. Residue Ser-9 is modified to Phosphoserine. Residues Lys-16, Lys-17, and Lys-23 each participate in a glycyl lysine isopeptide (Lys-Gly) (interchain with G-Cter in SUMO2) cross-link. The interval 16-25 (KKEGEYIKLK) is (Microbial infection) Interaction with Tula hantavirus. The Ubiquitin-like domain occupies 20-97 (EYIKLKVIGQ…IEVYQEQTGG (78 aa)). Lys-25 participates in a covalent cross-link: Glycyl lysine isopeptide (Lys-Gly) (interchain with G-Cter in SUMO1). Ser-32 carries the phosphoserine modification. Residues Lys-37, Lys-39, Lys-45, and Lys-46 each participate in a glycyl lysine isopeptide (Lys-Gly) (interchain with G-Cter in SUMO2) cross-link. The (Microbial infection) Interaction with Tula hantavirus stretch occupies residues 37–40 (KVKM). A Glycyl lysine isopeptide (Gly-Lys) (interchain with K-? in acceptor proteins) cross-link involves residue Gly-97. Residues 98–101 (HSTV) constitute a propeptide that is removed on maturation.

The protein belongs to the ubiquitin family. SUMO subfamily. As to quaternary structure, covalently attached to KCNB1; UBE2I increases cross-linking with KCNB1 and PIAS1 decreases cross-links with KCNB1. Interacts with SAE2, RANBP2, PIAS1 and PIAS2. Interacts with PRKN. Covalently attached to a number of proteins such as IKFZ1, PML, RANGAP1, HIPK2, SP100, p53, p73-alpha, MDM2, JUN, DNMT3B and TDG. Also interacts with HIF1A, HIPK2, HIPK3, CHD3, EXOSC9, RAD51 and RAD52. Interacts with USP25 (via ts SIM domain); the interaction weakly sumoylates USP25. Interacts with SIMC1, CASP8AP2, RNF111 and SOBP (via SIM domains). Interacts with BHLHE40/DEC1. Interacts with RWDD3. Interacts with UBE2I/UBC9 and this interaction is enhanced in the presence of RWDD3. Interacts with MTA1. Interacts with SENP2. Interacts with HINT1. In terms of assembly, (Microbial infection) Interacts with Epstein-barr virus BGLF4. (Microbial infection) Interacts (via N-terminus) with Tula hantavirus nucleoprotein. As to quaternary structure, (Microbial infection) Interacts (via N-terminus) with Hantaan hantavirus nucleoprotein. In terms of processing, cleavage of precursor form by SENP1 or SENP2 is necessary for function. Post-translationally, polymeric SUMO1 chains undergo polyubiquitination by RNF4.

Its subcellular location is the nucleus membrane. It is found in the nucleus speckle. It localises to the cytoplasm. The protein localises to the nucleus. The protein resides in the PML body. Its subcellular location is the cell membrane. In terms of biological role, ubiquitin-like protein that can be covalently attached to proteins as a monomer or a lysine-linked polymer. Covalent attachment via an isopeptide bond to its substrates requires prior activation by the E1 complex SAE1-SAE2 and linkage to the E2 enzyme UBE2I, and can be promoted by E3 ligases such as PIAS1-4, RANBP2 or CBX4. This post-translational modification on lysine residues of proteins plays a crucial role in a number of cellular processes such as nuclear transport, DNA replication and repair, mitosis and signal transduction. Involved for instance in targeting RANGAP1 to the nuclear pore complex protein RANBP2. Covalently attached to the voltage-gated potassium channel KCNB1; this modulates the gating characteristics of KCNB1. Polymeric SUMO1 chains are also susceptible to polyubiquitination which functions as a signal for proteasomal degradation of modified proteins. May also regulate a network of genes involved in palate development. Covalently attached to ZFHX3. The polypeptide is Small ubiquitin-related modifier 1 (SUMO1) (Homo sapiens (Human)).